Reading from the N-terminus, the 59-residue chain is Protein translocase subunit SecE (59 aa).

Residues 39 to 59 traverse the membrane as a helical segment; that stretch reads VMALFLGLIDALFVALLSFFF.

Belongs to the SecE/SEC61-gamma family. As to quaternary structure, component of the Sec protein translocase complex. Heterotrimer consisting of SecY, SecE and SecG subunits. The heterotrimers can form oligomers, although 1 heterotrimer is thought to be able to translocate proteins. Interacts with the ribosome. Interacts with SecDF, and other proteins may be involved. Interacts with SecA.

It is found in the cell inner membrane. Essential subunit of the Sec protein translocation channel SecYEG. Clamps together the 2 halves of SecY. May contact the channel plug during translocation. The chain is Protein translocase subunit SecE from Treponema pallidum (strain Nichols).